Reading from the N-terminus, the 238-residue chain is Serine protease SplA (238 aa).

Positions 1–38 (MNKNVMVKGLTALTILTILTSLGFAENISNQPHSIAKA) are cleaved as a signal peptide. Active-site charge relay system residues include histidine 77, aspartate 116, and serine 192.

Belongs to the peptidase S1B family.

The protein localises to the secreted. This is Serine protease SplA (splA) from Staphylococcus aureus (strain COL).